The chain runs to 604 residues: Glutamine--fructose-6-phosphate aminotransferase [isomerizing] (604 aa).

Cys-2 serves as the catalytic Nucleophile; for GATase activity. Residues 2-218 (CGIVGVVGNR…DKELVILTKD (217 aa)) form the Glutamine amidotransferase type-2 domain. SIS domains are found at residues 284–423 (IVKT…ANGK) and 456–594 (VEKL…VDKP). Residue Lys-599 is the For Fru-6P isomerization activity of the active site.

Homodimer.

The protein localises to the cytoplasm. The enzyme catalyses D-fructose 6-phosphate + L-glutamine = D-glucosamine 6-phosphate + L-glutamate. Its function is as follows. Catalyzes the first step in hexosamine metabolism, converting fructose-6P into glucosamine-6P using glutamine as a nitrogen source. The chain is Glutamine--fructose-6-phosphate aminotransferase [isomerizing] from Streptococcus pyogenes serotype M6 (strain ATCC BAA-946 / MGAS10394).